The following is a 109-amino-acid chain: Spermidine export protein MdtI (109 aa).

4 helical membrane passes run 6–26 (WWHAAFLFLAVVLDILANILL), 36–56 (WMGILSLIAVLGAFSALAQAV), 63–83 (IAYALWGAFGIIATVAAGWIM), and 88–108 (LNYKGWGGIALLLLGMVMIKM).

Belongs to the drug/metabolite transporter (DMT) superfamily. Small multidrug resistance (SMR) (TC 2.A.7.1) family. MdtI subfamily. Forms a complex with MdtJ.

Its subcellular location is the cell inner membrane. Functionally, catalyzes the excretion of spermidine. This Photorhabdus laumondii subsp. laumondii (strain DSM 15139 / CIP 105565 / TT01) (Photorhabdus luminescens subsp. laumondii) protein is Spermidine export protein MdtI.